Consider the following 305-residue polypeptide: GMP synthase [glutamine-hydrolyzing] subunit B (305 aa).

One can recognise a GMPS ATP-PPase domain in the interval 2-184 (VKTEKFIQKS…LGLPPEIQHR (183 aa)). Residue 29-35 (SGGVDSS) participates in ATP binding.

As to quaternary structure, heterodimer composed of a glutamine amidotransferase subunit (A) and a GMP-binding subunit (B).

The enzyme catalyses XMP + L-glutamine + ATP + H2O = GMP + L-glutamate + AMP + diphosphate + 2 H(+). It participates in purine metabolism; GMP biosynthesis; GMP from XMP (L-Gln route): step 1/1. In terms of biological role, catalyzes the synthesis of GMP from XMP. This is GMP synthase [glutamine-hydrolyzing] subunit B from Methanoregula boonei (strain DSM 21154 / JCM 14090 / 6A8).